We begin with the raw amino-acid sequence, 152 residues long: Xanthine-guanine phosphoribosyltransferase (152 aa).

5-phospho-alpha-D-ribose 1-diphosphate is bound by residues 37–38 (RG) and 88–96 (DDLVDTGNT). Position 89 (Asp89) interacts with Mg(2+). Guanine contacts are provided by Asp92 and Ile135. 2 residues coordinate xanthine: Asp92 and Ile135. GMP is bound by residues 92 to 96 (DTGNT) and 134 to 135 (WI).

It belongs to the purine/pyrimidine phosphoribosyltransferase family. XGPT subfamily. Homotetramer. Mg(2+) serves as cofactor.

The protein localises to the cell inner membrane. The catalysed reaction is GMP + diphosphate = guanine + 5-phospho-alpha-D-ribose 1-diphosphate. It catalyses the reaction XMP + diphosphate = xanthine + 5-phospho-alpha-D-ribose 1-diphosphate. The enzyme catalyses IMP + diphosphate = hypoxanthine + 5-phospho-alpha-D-ribose 1-diphosphate. It functions in the pathway purine metabolism; GMP biosynthesis via salvage pathway; GMP from guanine: step 1/1. Its pathway is purine metabolism; XMP biosynthesis via salvage pathway; XMP from xanthine: step 1/1. Functionally, purine salvage pathway enzyme that catalyzes the transfer of the ribosyl-5-phosphate group from 5-phospho-alpha-D-ribose 1-diphosphate (PRPP) to the N9 position of the 6-oxopurines guanine and xanthine to form the corresponding ribonucleotides GMP (guanosine 5'-monophosphate) and XMP (xanthosine 5'-monophosphate), with the release of PPi. To a lesser extent, also acts on hypoxanthine. The polypeptide is Xanthine-guanine phosphoribosyltransferase (Mannheimia succiniciproducens (strain KCTC 0769BP / MBEL55E)).